The chain runs to 73 residues: UPF0154 protein PEPE_0872 (73 aa).

A helical membrane pass occupies residues 5-25 (IWIMIVIIALLVGAVGGFFFA).

It belongs to the UPF0154 family.

The protein localises to the cell membrane. The sequence is that of UPF0154 protein PEPE_0872 from Pediococcus pentosaceus (strain ATCC 25745 / CCUG 21536 / LMG 10740 / 183-1w).